A 246-amino-acid polypeptide reads, in one-letter code: Small ribosomal subunit protein uS2 (246 aa).

Belongs to the universal ribosomal protein uS2 family.

The polypeptide is Small ribosomal subunit protein uS2 (Lachnoclostridium phytofermentans (strain ATCC 700394 / DSM 18823 / ISDg) (Clostridium phytofermentans)).